Here is a 257-residue protein sequence, read N- to C-terminus: Imidazole glycerol phosphate synthase subunit HisF (257 aa).

Active-site residues include aspartate 11 and aspartate 130.

It belongs to the HisA/HisF family. Heterodimer of HisH and HisF.

The protein resides in the cytoplasm. It carries out the reaction 5-[(5-phospho-1-deoxy-D-ribulos-1-ylimino)methylamino]-1-(5-phospho-beta-D-ribosyl)imidazole-4-carboxamide + L-glutamine = D-erythro-1-(imidazol-4-yl)glycerol 3-phosphate + 5-amino-1-(5-phospho-beta-D-ribosyl)imidazole-4-carboxamide + L-glutamate + H(+). It functions in the pathway amino-acid biosynthesis; L-histidine biosynthesis; L-histidine from 5-phospho-alpha-D-ribose 1-diphosphate: step 5/9. IGPS catalyzes the conversion of PRFAR and glutamine to IGP, AICAR and glutamate. The HisF subunit catalyzes the cyclization activity that produces IGP and AICAR from PRFAR using the ammonia provided by the HisH subunit. This is Imidazole glycerol phosphate synthase subunit HisF from Shewanella putrefaciens (strain CN-32 / ATCC BAA-453).